Here is a 414-residue protein sequence, read N- to C-terminus: NAD-specific glutamate dehydrogenase (414 aa).

2 residues coordinate substrate: lysine 70 and lysine 94. The active-site Proton donor is lysine 106. Threonine 190 and asparagine 221 together coordinate NAD(+). A substrate-binding site is contributed by serine 348.

It belongs to the Glu/Leu/Phe/Val dehydrogenases family. Homohexamer.

The catalysed reaction is L-glutamate + NAD(+) + H2O = 2-oxoglutarate + NH4(+) + NADH + H(+). In Staphylococcus aureus (strain COL), this protein is NAD-specific glutamate dehydrogenase (gluD).